The sequence spans 384 residues: Probable inactive linolenate hydroperoxide lyase (384 aa).

Cysteine 346 is a heme binding site.

It belongs to the cytochrome P450 family. It depends on heme as a cofactor. As to expression, expressed in roots, leaves, flowers and siliques.

The chain is Probable inactive linolenate hydroperoxide lyase from Arabidopsis thaliana (Mouse-ear cress).